Consider the following 79-residue polypeptide: Exodeoxyribonuclease 7 small subunit (79 aa).

Belongs to the XseB family. Heterooligomer composed of large and small subunits.

The protein localises to the cytoplasm. The catalysed reaction is Exonucleolytic cleavage in either 5'- to 3'- or 3'- to 5'-direction to yield nucleoside 5'-phosphates.. In terms of biological role, bidirectionally degrades single-stranded DNA into large acid-insoluble oligonucleotides, which are then degraded further into small acid-soluble oligonucleotides. The protein is Exodeoxyribonuclease 7 small subunit of Haemophilus influenzae (strain PittGG).